A 554-amino-acid polypeptide reads, in one-letter code: MSLLEAFAEILEPADVHVAQRLTVLADEPDASVELAVALAVRALRGGSVCVDLRSVAGQVELPDLPWPDPDAWLAALAASPLLGQPPVLRLFGDLLYLDRYWLEEQQVCDDVLALVSARPGGAVPDVSRLFGAGFEEQRAAAKVALSQGLTVLTGGPGTGKTTTVARLLALLAEQAALAGKPSPRIALAAPTGKAAARLQEAVQLEIDQLDLIERRRLTGLHATTLHRLLGPRPDTSSRFRHHRANRLPHDVIVVDETSMVSLTMMARLLEAVRPQTRLVLVGDPDQLASVEAGAVLADLVEGLGSRGVAELKTSHRFGESIGALASAIRTGDADAALAVLAAGGEHIEWVHEDPVEQLREVVVPHAMRLRQAAILGDQREALATLDEHRLLCAHRRGPAGVDHWNRQVQRWLGEETGEPLWGSWYVGRPILVTANDYGLKLYNGDTGVVVATPDGMRAVIGDAGTFATGRLTDVETMHAMTIHKSQGSQADEVTVLLPSEDSRLLTRELFYTAVTRAKTRVRVVGAEAEVRAAIERQAVRATGLRKRLRPAGV.

155–162 (GGPGTGKT) is a binding site for ATP.

Belongs to the RecD family. Heterotrimer of RecB, RecC and RecD. All subunits contribute to DNA-binding.

It catalyses the reaction Couples ATP hydrolysis with the unwinding of duplex DNA at the replication fork by translocating in the 5'-3' direction. This creates two antiparallel DNA single strands (ssDNA). The leading ssDNA polymer is the template for DNA polymerase III holoenzyme which synthesizes a continuous strand.. It carries out the reaction ATP + H2O = ADP + phosphate + H(+). A helicase/nuclease that prepares dsDNA breaks (DSB) for recombinational DNA repair. Binds to DSBs and unwinds DNA via a highly rapid and processive ATP-dependent bidirectional helicase activity. Holoenzyme degrades any linearized DNA that is unable to undergo homologous recombination. In the holoenzyme this subunit has ssDNA-dependent ATPase and 5'-3' helicase activity. When added to pre-assembled RecBC greatly stimulates nuclease activity and augments holoenzyme processivity. Unlike the case in E.coli, suppresses RecA-dependent homologous recombination, is instead required for single-strand annealing pathway repair of DSB. This chain is RecBCD enzyme subunit RecD, found in Mycolicibacterium smegmatis (strain ATCC 700084 / mc(2)155) (Mycobacterium smegmatis).